A 392-amino-acid polypeptide reads, in one-letter code: ATP phosphoribosyltransferase regulatory subunit (392 aa).

The protein belongs to the class-II aminoacyl-tRNA synthetase family. HisZ subfamily. As to quaternary structure, heteromultimer composed of HisG and HisZ subunits.

It is found in the cytoplasm. It participates in amino-acid biosynthesis; L-histidine biosynthesis; L-histidine from 5-phospho-alpha-D-ribose 1-diphosphate: step 1/9. Required for the first step of histidine biosynthesis. May allow the feedback regulation of ATP phosphoribosyltransferase activity by histidine. This is ATP phosphoribosyltransferase regulatory subunit from Listeria monocytogenes serotype 4b (strain F2365).